Reading from the N-terminus, the 163-residue chain is Crossover junction endodeoxyribonuclease RuvC (163 aa).

Residues D9, E76, and D148 contribute to the active site. Mg(2+) is bound by residues D9, E76, and D148.

Belongs to the RuvC family. In terms of assembly, homodimer which binds Holliday junction (HJ) DNA. The HJ becomes 2-fold symmetrical on binding to RuvC with unstacked arms; it has a different conformation from HJ DNA in complex with RuvA. In the full resolvosome a probable DNA-RuvA(4)-RuvB(12)-RuvC(2) complex forms which resolves the HJ. The cofactor is Mg(2+).

The protein localises to the cytoplasm. It carries out the reaction Endonucleolytic cleavage at a junction such as a reciprocal single-stranded crossover between two homologous DNA duplexes (Holliday junction).. In terms of biological role, the RuvA-RuvB-RuvC complex processes Holliday junction (HJ) DNA during genetic recombination and DNA repair. Endonuclease that resolves HJ intermediates. Cleaves cruciform DNA by making single-stranded nicks across the HJ at symmetrical positions within the homologous arms, yielding a 5'-phosphate and a 3'-hydroxyl group; requires a central core of homology in the junction. The consensus cleavage sequence is 5'-(A/T)TT(C/G)-3'. Cleavage occurs on the 3'-side of the TT dinucleotide at the point of strand exchange. HJ branch migration catalyzed by RuvA-RuvB allows RuvC to scan DNA until it finds its consensus sequence, where it cleaves and resolves the cruciform DNA. This chain is Crossover junction endodeoxyribonuclease RuvC, found in Trichormus variabilis (strain ATCC 29413 / PCC 7937) (Anabaena variabilis).